The primary structure comprises 418 residues: Thyroxine-binding globulin (418 aa).

Positions 1 to 20 are cleaved as a signal peptide; that stretch reads MSMFFYLFLLVLGLQATIHC. N-linked (GlcNAc...) asparagine glycosylation is found at Asn-24, Asn-39, Asn-102, Asn-168, Asn-227, and Asn-256. Asn-296 and Lys-401 together coordinate thyroxine.

This sequence belongs to the serpin family. As to expression, expressed by the liver and secreted in plasma.

It is found in the secreted. Major thyroid hormone transport protein in serum. This Rattus norvegicus (Rat) protein is Thyroxine-binding globulin (Serpina7).